The following is a 288-amino-acid chain: Phytanoyl-CoA dioxygenase domain-containing protein 1 homolog (288 aa).

2-oxoglutarate contacts are provided by residues Lys-95, Met-134, 149–151 (HVD), and Trp-167. His-149 and Asp-151 together coordinate Fe cation. His-242 is a binding site for Fe cation. Ser-244 and Arg-253 together coordinate 2-oxoglutarate.

The protein belongs to the PhyH family. PHYHD1 subfamily. The cofactor is Fe cation.

Has alpha-ketoglutarate-dependent dioxygenase activity. Does not show detectable activity towards fatty acid CoA thioesters. Is not expected to be active with phytanoyl CoA. The chain is Phytanoyl-CoA dioxygenase domain-containing protein 1 homolog from Caenorhabditis briggsae.